The sequence spans 776 residues: Intermediate filament protein ifp-1 (776 aa).

Residues 1-23 form a head region; the sequence is MDSANARDCLLHLARAKLSERQD. The IF rod domain maps to 20 to 371; the sequence is ERQDLVQLND…ELLDRSGDPR (352 aa). The tract at residues 24–55 is coil 1A; it reads LVQLNDQFVDIIEHVHYMEAEHTALEHDYNLL. Residues 56-69 form a linker 1 region; the sequence is KSGVQSDSSGINEI. Positions 70 to 207 are coil 1B; the sequence is YNVEIRTVRS…EDNKKIIMNE (138 aa). Residues 208-224 form a linker 12 region; sequence HKYFVRDRNADRHVFRD. Residues 225–620 are coil 2; that stretch reads QLRKAIADIR…QRGPHHSSYH (396 aa). 2 disordered regions span residues 453-473 and 518-544; these read ASPI…DSRS and NTTQ…SERR. A compositionally biased stretch (polar residues) spans 518–536; sequence NTTQINNPYASRTPTSSVN. The segment at 621-768 is tail; that stretch reads AATGSVSNSI…WFVYTSNTEI (148 aa). The LTD domain maps to 653-764; the sequence is NFQRFTRWYK…EVKSWFVYTS (112 aa).

The protein belongs to the intermediate filament family.

It localises to the cytoplasm. Its function is as follows. Cytoplasmic intermediate filaments provide mechanical strength to cells. Not essential protein. This is Intermediate filament protein ifp-1 (ifp-1) from Caenorhabditis elegans.